The primary structure comprises 467 residues: Solute carrier family 52, riboflavin transporter, member 3 (467 aa).

At 1 to 2 (MA) the chain is on the cytoplasmic side. Residues 3–23 (FLIHLLVCTFGMGSWVAINGL) form a helical membrane-spanning segment. Topologically, residues 24–43 (WVELPLLVTELPEGWYLPSY) are extracellular. Residues 44–64 (LTVIIQLANVGPLLVTLLHHF) traverse the membrane as a helical segment. Topologically, residues 65–71 (RPGCLSE) are cytoplasmic. A helical membrane pass occupies residues 72 to 92 (VAVVFTVLGVGTIACTLFAFL). The Extracellular portion of the chain corresponds to 93–105 (WNVTSWVLGSRHS). Asparagine 94 carries N-linked (GlcNAc...) asparagine glycosylation. Residues 106-126 (IAFLVLTFFLALVDCTSSVTF) traverse the membrane as a helical segment. At 127-137 (LPFMSRLPTYY) the chain is on the cytoplasmic side. A helical membrane pass occupies residues 138–158 (LTTFFVGEGLSGLLPALVALA). At 159–220 (QGSGLTTCVN…SRYLPANFSP (62 aa)) the chain is on the extracellular side. Asparagine 168 carries N-linked (GlcNAc...) asparagine glycosylation. The helical transmembrane segment at 221–241 (LVFFLLLSFMMACCFISFFFL) threads the bilayer. Residues 242 to 294 (QRQPKRWEASIEDLLTSQVTLNSIRPQEGKDLGPPEESGKAQDPPEEKTAPQH) are Cytoplasmic-facing. Phosphoserine is present on serine 251. A disordered region spans residues 266–288 (RPQEGKDLGPPEESGKAQDPPEE). Basic and acidic residues predominate over residues 268-288 (QEGKDLGPPEESGKAQDPPEE). Residues 295 to 315 (LAHLTFIYVLVAFVNALTNGV) form a helical membrane-spanning segment. Residues 316 to 333 (LPSVQTYSCLSYGPVAYH) lie on the Extracellular side of the membrane. A helical membrane pass occupies residues 334 to 354 (LSATLSSMASPLTCFLSIFLP). Topologically, residues 355–359 (NRSLP) are cytoplasmic. Residues 360–380 (FLGVLAVLGTSFGAYNMAMAV) traverse the membrane as a helical segment. Topologically, residues 381-394 (MSPCPFMQGHWGGE) are extracellular. Residues 395–415 (VLIVVSWVLFTGCLSYVKVML) form a helical membrane-spanning segment. The Cytoplasmic segment spans residues 416 to 425 (GVILRDHSRS). A helical transmembrane segment spans residues 426–446 (ALLWCGAAVQLGSLLGAVVMF). The Extracellular portion of the chain corresponds to 447–467 (PLVNVLRLFSSADFCSLQCSA).

It belongs to the riboflavin transporter family.

The protein localises to the cell membrane. The catalysed reaction is riboflavin(in) = riboflavin(out). Functionally, plasma membrane transporter mediating the uptake by cells of the water soluble vitamin B2/riboflavin that plays a key role in biochemical oxidation-reduction reactions of the carbohydrate, lipid, and amino acid metabolism. The chain is Solute carrier family 52, riboflavin transporter, member 3 (SLC52A3) from Bos taurus (Bovine).